The following is a 235-amino-acid chain: Protein GrpE (235 aa).

Composition is skewed to basic and acidic residues over residues Met1–Asn16 and Asn24–Gln35. The interval Met1 to Lys51 is disordered.

This sequence belongs to the GrpE family. Homodimer.

The protein resides in the cytoplasm. Participates actively in the response to hyperosmotic and heat shock by preventing the aggregation of stress-denatured proteins, in association with DnaK and GrpE. It is the nucleotide exchange factor for DnaK and may function as a thermosensor. Unfolded proteins bind initially to DnaJ; upon interaction with the DnaJ-bound protein, DnaK hydrolyzes its bound ATP, resulting in the formation of a stable complex. GrpE releases ADP from DnaK; ATP binding to DnaK triggers the release of the substrate protein, thus completing the reaction cycle. Several rounds of ATP-dependent interactions between DnaJ, DnaK and GrpE are required for fully efficient folding. This chain is Protein GrpE, found in Malacoplasma penetrans (strain HF-2) (Mycoplasma penetrans).